The following is a 160-amino-acid chain: Transcription elongation factor GreA (160 aa).

Residues 1–72 are a coiled coil; it reads MAEKTYPMTL…QISSLETKIR (72 aa).

The protein belongs to the GreA/GreB family.

In terms of biological role, necessary for efficient RNA polymerase transcription elongation past template-encoded arresting sites. The arresting sites in DNA have the property of trapping a certain fraction of elongating RNA polymerases that pass through, resulting in locked ternary complexes. Cleavage of the nascent transcript by cleavage factors such as GreA or GreB allows the resumption of elongation from the new 3'terminus. GreA releases sequences of 2 to 3 nucleotides. In Streptococcus sanguinis (strain SK36), this protein is Transcription elongation factor GreA.